Consider the following 311-residue polypeptide: Malate dehydrogenase (311 aa).

NAD(+) is bound by residues 7–13 (GAAGGIG) and Asp34. Arg81 and Arg87 together coordinate substrate. NAD(+) contacts are provided by residues Asn94 and 117–119 (ITN). Substrate is bound by residues Asn119 and Arg153. The Proton acceptor role is filled by His177. Met227 contributes to the NAD(+) binding site.

The protein belongs to the LDH/MDH superfamily. MDH type 1 family. As to quaternary structure, homodimer.

It catalyses the reaction (S)-malate + NAD(+) = oxaloacetate + NADH + H(+). Functionally, catalyzes the reversible oxidation of malate to oxaloacetate. This chain is Malate dehydrogenase, found in Shewanella amazonensis (strain ATCC BAA-1098 / SB2B).